The sequence spans 1121 residues: Phytochrome 2 (1121 aa).

A GAF domain is found at 214–393 (DIGLLCDTVV…VFGMQLNMEV (180 aa)). C319 contributes to the phytochromobilin binding site. PAS domains lie at 608-679 (VANE…SQGE) and 742-813 (DYKT…TKFM). The 221-residue stretch at 893-1113 (YIRQEIKNPL…VVYVELPMAQ (221 aa)) folds into the Histidine kinase domain.

The protein belongs to the phytochrome family. As to quaternary structure, homodimer. Contains one covalently linked phytochromobilin chromophore.

Regulatory photoreceptor which exists in two forms that are reversibly interconvertible by light: the Pr form that absorbs maximally in the red region of the spectrum and the Pfr form that absorbs maximally in the far-red region. Photoconversion of Pr to Pfr induces an array of morphogenic responses, whereas reconversion of Pfr to Pr cancels the induction of those responses. Pfr controls the expression of a number of nuclear genes including those encoding the small subunit of ribulose-bisphosphate carboxylase, chlorophyll A/B binding protein, protochlorophyllide reductase, rRNA, etc. It also controls the expression of its own gene(s) in a negative feedback fashion. The protein is Phytochrome 2 (PHY2) of Ceratodon purpureus (Fire moss).